Consider the following 775-residue polypeptide: MAIAFHTFLLQLLLFFFASFAEANDSRKTYLVQMKVGGHRYGSSSGHQELLGEVLDDDSTLADAFIYSYKESFTGFSASLTPRERQKLMRRREVLEVSRSRNLKLQTTRSWDFMNLTLKAERNPENESDLVVAVIDSGIWPYSELFGSDSPPPPGWENKCENITCNNKIVGARSYYPKKEKYKWVEEKSVIDVTGHGTHVASIVAGRKVEKAGYFGLAEGTMRGGVPNAKIAVYKTCWRVIRKNGREDSVCREDNILKAIDDAIADKVDIISYSQGFQFTPLQKDKVSWAFLRALKNGILTSAAAGNYANNGKFYYTVANGAPWVMTVAASLKDRIFETKLELEGEDKPIIVYDTINTFETQDSFYPLLNEKAPPESTRKRELIAERNGYSILSNYDEKDKGKDVFFEFAQINLLDEAIKEREKGAIVLGGKSYDFNESIKLQFPIASIFLDEQKKGKLWDYYKKDQSKERLAKIHKTEEIPREEGWVPTVAHLSSRGPNCDSFLANILKPDIAAPGLDIIAGWPENVKLSSDRPANDYRHLRFNIMSGTSMACPHATGLALYLKSFKRWSPSAIKSALMTTSSEMTDDDNEFAYGSGHLNATKVRDPGLVYETHYQDYIDYLCKLGYNTEKLRSHVGSDKIDCSKTEIDHDADLNYPTMTARVPLPLDTPFKKVFHRTVTNVNDGEFTYLREINYRGDKDFDEIIVDPPQLKFSELGETKTFTVTVTGISKRNWNKNRAFMTRNTWLTWTEKDGSRQVRSPIVIYSIKGPKACM.

The first 23 residues, 1 to 23, serve as a signal peptide directing secretion; that stretch reads MAIAFHTFLLQLLLFFFASFAEA. Asparagine 24 carries N-linked (GlcNAc...) asparagine glycosylation. A propeptide spans 24–106 (activation peptide); the sequence is NDSRKTYLVQ…VSRSRNLKLQ (83 aa). The region spanning 29-105 is the Inhibitor I9 domain; that stretch reads TYLVQMKVGG…EVSRSRNLKL (77 aa). Residues 110 to 606 enclose the Peptidase S8 domain; it reads SWDFMNLTLK…SGHLNATKVR (497 aa). 2 N-linked (GlcNAc...) asparagine glycosylation sites follow: asparagine 115 and asparagine 126. Aspartate 136 serves as the catalytic Charge relay system. An N-linked (GlcNAc...) asparagine glycan is attached at asparagine 162. Histidine 196 (charge relay system) is an active-site residue. The 95-residue stretch at 365–459 folds into the PA domain; the sequence is FYPLLNEKAP…FLDEQKKGKL (95 aa). Asparagine 437 carries N-linked (GlcNAc...) asparagine glycosylation. The active-site Charge relay system is the serine 551. Asparagine 601 carries N-linked (GlcNAc...) asparagine glycosylation.

Belongs to the peptidase S8 family. In terms of processing, the C-terminal propeptide is autocleaved.

It is found in the secreted. This is Subtilisin-like protease SBT4.1 from Arabidopsis thaliana (Mouse-ear cress).